Reading from the N-terminus, the 489-residue chain is Protein LMBR1L (489 aa).

At 1–21 (MEAADYEVLSVREQLFHDRVR) the chain is on the extracellular side. Residues 1–59 (MEAADYEVLSVREQLFHDRVRECIISILLFATLYILCHIFLTRFKKPAEFTTVDDEDAT) are interaction with LGB. Positions 1-76 (MEAADYEVLS…LCTFTLAVAL (76 aa)) are LCN1-binding. Residues 22-42 (ECIISILLFATLYILCHIFLT) form a helical membrane-spanning segment. Residues 43–66 (RFKKPAEFTTVDDEDATVNKIALE) are Cytoplasmic-facing. Residues 67–87 (LCTFTLAVALGAVLLLPFSII) form a helical membrane-spanning segment. Topologically, residues 88–114 (SNEVLLSLPRNYYIQWLNGSLIHGLWN) are extracellular. The chain crosses the membrane as a helical span at residues 115 to 135 (LVFLFSNLSLVFLMPFAYFFT). The Cytoplasmic portion of the chain corresponds to 136 to 154 (ESEGFAGSRKGVLGRVYET). A helical membrane pass occupies residues 155 to 175 (VVMLILLTLLVLGMVWVASAI). Residues 176-196 (VDNDKASRESLYDFWEYYLPY) lie on the Extracellular side of the membrane. A helical transmembrane segment spans residues 197–217 (LYSCISFLGVLLLLVCTPLGL). Residues 218 to 305 (ARMFSVTGKL…NLGYPLAMLC (88 aa)) are Cytoplasmic-facing. The chain crosses the membrane as a helical span at residues 306–326 (LLVLTGLSVLIVAVHILELLI). Over 327 to 350 (DEAAMPRGMQDAALGQASFSKLGS) the chain is Extracellular. A helical membrane pass occupies residues 351–371 (FGAIIQVVLIFYLMVSSVVGF). Over 372–388 (YSSPLFGSLRPRWHDTS) the chain is Cytoplasmic. A helical membrane pass occupies residues 389 to 409 (MTQIIGNCVCLLVLSSALPVF). Residues 410–431 (SRTLGLTRFDLLGDFGRFNWLG) lie on the Extracellular side of the membrane. The chain crosses the membrane as a helical span at residues 432–452 (NFYIVFLYNAAFAGLTTLCLV). Residues 453–489 (KTFTAAVRAELIRAFGLDRLPLPVSGFPRASRKKQHQ) lie on the Cytoplasmic side of the membrane.

Belongs to the LIMR family. Dimer. Can also form higher oligomers. Interacts with LCN1; this interaction mediates the endocytosis of LCN1. Interacts with UBAC2, FAF2, VCP, AMFR, ZNRF3, CTNNB1, LRP6, GSK3B, FZD6, DVL2 and RNF43. Interacts with GSK3A. Interaction with LGB and SCGB1A1 is controversial. As to expression, highly expressed in the bone marrow, thymus, spleen and lymphocytes.

The protein localises to the cell membrane. It localises to the endoplasmic reticulum membrane. Functionally, plays an essential role in lymphocyte development by negatively regulating the canonical Wnt signaling pathway. In association with UBAC2 and E3 ubiquitin-protein ligase AMFR, promotes the ubiquitin-mediated degradation of CTNNB1 and Wnt receptors FZD6 and LRP6. LMBR1L stabilizes the beta-catenin destruction complex that is required for regulating CTNNB1 levels. Acts as a LCN1 receptor and can mediate its endocytosis. The polypeptide is Protein LMBR1L (Lmbr1l) (Mus musculus (Mouse)).